Reading from the N-terminus, the 103-residue chain is MAAVSLSVSTVKPLGDRVFVKVSESEEKTAGGILLPDTAKEKPQVGEVAQVGPGKRNEDGSRQSPEVSVGDKVLYSKYAGTDIKLGSDEYVLLSEKDILAVVN.

Residues 31-67 (GGILLPDTAKEKPQVGEVAQVGPGKRNEDGSRQSPEV) form a disordered region.

Belongs to the GroES chaperonin family. Heptamer of 7 subunits arranged in a ring. Interacts with the chaperonin GroEL.

Its subcellular location is the cytoplasm. Its function is as follows. Together with the chaperonin GroEL, plays an essential role in assisting protein folding. The GroEL-GroES system forms a nano-cage that allows encapsulation of the non-native substrate proteins and provides a physical environment optimized to promote and accelerate protein folding. GroES binds to the apical surface of the GroEL ring, thereby capping the opening of the GroEL channel. This Prochlorococcus marinus (strain NATL2A) protein is Co-chaperonin GroES.